The chain runs to 136 residues: MGGETKVFTLAEVSQHNNAKDCWLVISGKVYDVTKFLDDHPGGDEVLLSATGKDATDDFEDVGHSSSARAMLDEYYVGDIDSATIPTKTKYTPPNQPHYNQDKTSEFVVKLLQFLVPLIILGVAFGIRFYTKQSSA.

A Cytochrome b5 heme-binding domain is found at 5-81 (TKVFTLAEVS…LDEYYVGDID (77 aa)). Heme contacts are provided by His40 and His64. A helical transmembrane segment spans residues 107–127 (FVVKLLQFLVPLIILGVAFGI).

Belongs to the cytochrome b5 family. In terms of tissue distribution, is highly expressed in developing seeds, moderately expressed in flowers, and is expressed at low levels in the leaf.

The protein resides in the endoplasmic reticulum membrane. The protein localises to the microsome membrane. Functionally, cytochrome b5 is a membrane bound hemoprotein which function as an electron carrier for several membrane bound oxygenases. May play a key role in the modification by desaturation of fatty acids in the endoplasmic reticulum, which in the developing seed is utilized for membrane synthesis and in the developmentally regulated production of large amounts of storage lipids. Is involved in the reduction of cytochrome P-450 and may therefore be involved in flavonoid biosynthesis in the petals. This is Cytochrome b5 from Nicotiana tabacum (Common tobacco).